A 149-amino-acid chain; its full sequence is Large ribosomal subunit protein uL22c (149 aa).

Belongs to the universal ribosomal protein uL22 family. As to quaternary structure, part of the 50S ribosomal subunit.

Its subcellular location is the plastid. It localises to the chloroplast. Its function is as follows. This protein binds specifically to 23S rRNA. Functionally, the globular domain of the protein is located near the polypeptide exit tunnel on the outside of the subunit, while an extended beta-hairpin is found that lines the wall of the exit tunnel in the center of the 70S ribosome. In Hordeum vulgare (Barley), this protein is Large ribosomal subunit protein uL22c (rpl22).